A 229-amino-acid chain; its full sequence is Ion-translocating oxidoreductase complex subunit E (229 aa).

A run of 5 helical transmembrane segments spans residues 58–78, 82–102, 105–125, 147–167, and 201–221; these read LGLG…ISLF, IPHD…VTTI, LMNA…PLIV, AFDG…LGAI, and GLLL…ILAV.

This sequence belongs to the NqrDE/RnfAE family. The complex is composed of six subunits: RnfA, RnfB, RnfC, RnfD, RnfE and RnfG.

It is found in the cell inner membrane. Part of a membrane-bound complex that couples electron transfer with translocation of ions across the membrane. This chain is Ion-translocating oxidoreductase complex subunit E, found in Glaesserella parasuis serovar 5 (strain SH0165) (Haemophilus parasuis).